The sequence spans 101 residues: Small ribosomal subunit protein uS14 (101 aa).

The protein belongs to the universal ribosomal protein uS14 family. In terms of assembly, part of the 30S ribosomal subunit. Contacts proteins S3 and S10.

Its function is as follows. Binds 16S rRNA, required for the assembly of 30S particles and may also be responsible for determining the conformation of the 16S rRNA at the A site. In Haemophilus ducreyi (strain 35000HP / ATCC 700724), this protein is Small ribosomal subunit protein uS14.